The primary structure comprises 643 residues: Probable potassium transport system protein Kup 2 (643 aa).

Positions 1-20 (MSSHVPSFLRGTPDMTAHGG) are disordered. A run of 12 helical transmembrane segments spans residues 27–47 (VAGL…TSPL), 70–90 (VLSL…VIII), 120–140 (LMVS…SIIT), 157–177 (PHLE…LFAI), 185–205 (VGKM…ILGI), 231–251 (GWHA…AEAL), 267–287 (WYLL…ALLI), 300–320 (LAPA…TVIA), 357–377 (IYLP…VVGF), 389–409 (VAVT…MLLI), 419–439 (WLIG…SIKI), and 440–460 (PDGG…LTTW).

This sequence belongs to the HAK/KUP transporter (TC 2.A.72) family.

It is found in the cell inner membrane. It carries out the reaction K(+)(in) + H(+)(in) = K(+)(out) + H(+)(out). Functionally, transport of potassium into the cell. Likely operates as a K(+):H(+) symporter. This is Probable potassium transport system protein Kup 2 from Paramagnetospirillum magneticum (strain ATCC 700264 / AMB-1) (Magnetospirillum magneticum).